Consider the following 163-residue polypeptide: SsrA-binding protein (163 aa).

Residues 138 to 157 show a composition bias toward basic and acidic residues; that stretch reads EDRRGAIAERESKREMDRAL. The tract at residues 138–163 is disordered; sequence EDRRGAIAERESKREMDRALARGRRR.

Belongs to the SmpB family.

It localises to the cytoplasm. In terms of biological role, required for rescue of stalled ribosomes mediated by trans-translation. Binds to transfer-messenger RNA (tmRNA), required for stable association of tmRNA with ribosomes. tmRNA and SmpB together mimic tRNA shape, replacing the anticodon stem-loop with SmpB. tmRNA is encoded by the ssrA gene; the 2 termini fold to resemble tRNA(Ala) and it encodes a 'tag peptide', a short internal open reading frame. During trans-translation Ala-aminoacylated tmRNA acts like a tRNA, entering the A-site of stalled ribosomes, displacing the stalled mRNA. The ribosome then switches to translate the ORF on the tmRNA; the nascent peptide is terminated with the 'tag peptide' encoded by the tmRNA and targeted for degradation. The ribosome is freed to recommence translation, which seems to be the essential function of trans-translation. This is SsrA-binding protein from Anaeromyxobacter dehalogenans (strain 2CP-1 / ATCC BAA-258).